We begin with the raw amino-acid sequence, 447 residues long: MSASATNGTHYEQLHQGRTKMYKSKVDVVLGAQWGDEGKGKVVDMLASDVDIVCRCQGGNNAGHTVVANGTEFDFHLLPSGVVNEKCVSVIGNGVVIHLPSLFDEVLKNEAKGLQHLENRLIISDRAHLVFDFHQHVDGMQEAEKGGKSLGTTKKGIGPAYSSKATRNGIRVGELLGDFNLFSEKFKSIVATHVRLFPSINVDVEAELARYKDYADKVRPYVKDTICFLHTALRNGKTILVEGANAAMLDIDFGTYPYVTSSNCSIGGVLTGLGLPPQTIGEVIGVVKAYTTRVGDGPFPTEQLNDIGDLLQTRGFEIGVTTKRKRRCGWLDIPLLKYTSLVNGYTCICVTKLDILDTLPEIKVAVAYKKPSGEKLDHFPGTIAELGNIEVEYAVLPGWQTSTEDVRNFKELPENAQSYVRFLESELSVPVRWVGVGKGRESIINVH.

GTP contacts are provided by residues 35 to 41 (GDEGKGK) and 63 to 65 (GHT). The active-site Proton acceptor is the D36. D36 and G63 together coordinate Mg(2+). IMP-binding positions include 36–39 (DEGK), 61–64 (NAGH), T153, R167, N245, T260, and R324. The active-site Proton donor is the H64. 320–326 (VTTKRKR) lines the substrate pocket. GTP contacts are provided by residues R326, 352–354 (KLD), and 435–437 (GVG).

This sequence belongs to the adenylosuccinate synthetase family. As to quaternary structure, homodimer. Mg(2+) is required as a cofactor.

The protein resides in the cytoplasm. It carries out the reaction IMP + L-aspartate + GTP = N(6)-(1,2-dicarboxyethyl)-AMP + GDP + phosphate + 2 H(+). Its pathway is purine metabolism; AMP biosynthesis via de novo pathway; AMP from IMP: step 1/2. Functionally, plays an important role in the de novo pathway and in the salvage pathway of purine nucleotide biosynthesis. Catalyzes the first committed step in the biosynthesis of AMP from IMP. This is Adenylosuccinate synthetase from Drosophila erecta (Fruit fly).